Here is a 389-residue protein sequence, read N- to C-terminus: Geodin cluster transcriptional coactivator gedD (389 aa).

Residues 13–83 (LAWHVQLLAC…QPGQIMHTPL (71 aa)) form the HTH iclR-type domain. The H-T-H motif DNA-binding region spans 43–62 (VRDLAQLCGVSETTLSRVVR).

The protein localises to the nucleus. Its function is as follows. Transcriptional coactivator; part of the gene cluster that mediates the biosynthesis of geodin, an intermediate in the biosynthesis of other natural products. With gedR, coregulates the production of geodin. The sequence is that of Geodin cluster transcriptional coactivator gedD (gedD) from Aspergillus terreus (strain NIH 2624 / FGSC A1156).